The primary structure comprises 336 residues: Succinylglutamate desuccinylase (336 aa).

Zn(2+) contacts are provided by histidine 59, glutamate 62, and histidine 151. Glutamate 215 is a catalytic residue.

It belongs to the AspA/AstE family. Succinylglutamate desuccinylase subfamily. Requires Zn(2+) as cofactor.

The enzyme catalyses N-succinyl-L-glutamate + H2O = L-glutamate + succinate. The protein operates within amino-acid degradation; L-arginine degradation via AST pathway; L-glutamate and succinate from L-arginine: step 5/5. Its function is as follows. Transforms N(2)-succinylglutamate into succinate and glutamate. The polypeptide is Succinylglutamate desuccinylase (Pseudomonas fluorescens (strain ATCC BAA-477 / NRRL B-23932 / Pf-5)).